The following is a 278-amino-acid chain: GRGNSIKHLRHENIISLLDVFISPGEDIYFITELLGTDLHRLLSSRPLERQFVQYFLYQMLRALKFVHPAGVVHRDLKPSNILINENCDLKICDFGLARLQDPQMTGYVSTRYYRAPEIMLTWQEYDSAVDIWSVGCIFAEMIDGRPIFPGKDHVHQLTVITELLGSPPEDVINTITSENTRRFVDALPKREKIPFQQRFPNASEEEIDLLEKMLDFNPKERITAADAIQHPYLAPYHDPSDEPVANERFDWSFNDADLPVDQWKVMMYTEILITSEF.

The region spanning 1-234 (GRGNSIKHLR…AADAIQHPYL (234 aa)) is the Protein kinase domain. Thr-106 bears the Phosphothreonine mark. The TXY motif lies at 106–108 (TGY). Tyr-108 bears the Phosphotyrosine mark.

Belongs to the protein kinase superfamily. Ser/Thr protein kinase family. MAP kinase subfamily. HOG1 sub-subfamily. Mg(2+) serves as cofactor. In terms of processing, dually phosphorylated on Thr-106 and Tyr-108, which activates the enzyme.

Its subcellular location is the cytoplasm. The protein localises to the nucleus. The enzyme catalyses L-seryl-[protein] + ATP = O-phospho-L-seryl-[protein] + ADP + H(+). It carries out the reaction L-threonyl-[protein] + ATP = O-phospho-L-threonyl-[protein] + ADP + H(+). Its activity is regulated as follows. Activated by tyrosine and threonine phosphorylation. Its function is as follows. Proline-directed serine/threonine-protein kinase involved in a signal transduction pathway that is activated by changes in the osmolarity of the extracellular environment. Controls osmotic regulation of transcription of target genes. This is Mitogen-activated protein kinase HOG1 (HOG1) from Wallemia sebi.